Consider the following 1303-residue polypeptide: Phosphoribosylformylglycinamidine synthase (1303 aa).

ATP is bound by residues 308–319 (GASTGSGGEIRD) and Ala-679. 3 residues coordinate Mg(2+): Glu-719, Asn-723, and Asp-892. Residues 1003–1023 (LRDNPACADQEHEAKKDNSDP) are disordered. Basic and acidic residues predominate over residues 1011 to 1021 (DQEHEAKKDNS). The Glutamine amidotransferase type-1 domain maps to 1050-1303 (MAILREQGVN…MFQNARKNIG (254 aa)). Cys-1143 serves as the catalytic Nucleophile. Residues His-1268 and Glu-1270 contribute to the active site.

The protein in the N-terminal section; belongs to the FGAMS family. In terms of assembly, monomer.

It is found in the cytoplasm. It carries out the reaction N(2)-formyl-N(1)-(5-phospho-beta-D-ribosyl)glycinamide + L-glutamine + ATP + H2O = 2-formamido-N(1)-(5-O-phospho-beta-D-ribosyl)acetamidine + L-glutamate + ADP + phosphate + H(+). Its pathway is purine metabolism; IMP biosynthesis via de novo pathway; 5-amino-1-(5-phospho-D-ribosyl)imidazole from N(2)-formyl-N(1)-(5-phospho-D-ribosyl)glycinamide: step 1/2. Functionally, phosphoribosylformylglycinamidine synthase involved in the purines biosynthetic pathway. Catalyzes the ATP-dependent conversion of formylglycinamide ribonucleotide (FGAR) and glutamine to yield formylglycinamidine ribonucleotide (FGAM) and glutamate. In Aliivibrio fischeri (strain ATCC 700601 / ES114) (Vibrio fischeri), this protein is Phosphoribosylformylglycinamidine synthase.